Consider the following 127-residue polypeptide: Small ribosomal subunit protein uS13 (127 aa).

It belongs to the universal ribosomal protein uS13 family. As to quaternary structure, part of the 30S ribosomal subunit. Forms a loose heterodimer with protein S19. Forms two bridges to the 50S subunit in the 70S ribosome.

In terms of biological role, located at the top of the head of the 30S subunit, it contacts several helices of the 16S rRNA. In the 70S ribosome it contacts the 23S rRNA (bridge B1a) and protein L5 of the 50S subunit (bridge B1b), connecting the 2 subunits; these bridges are implicated in subunit movement. Contacts the tRNAs in the A and P-sites. In Pelagibacter ubique (strain HTCC1062), this protein is Small ribosomal subunit protein uS13.